A 267-amino-acid polypeptide reads, in one-letter code: 2-dehydro-3-deoxyphosphooctonate aldolase (267 aa).

It belongs to the KdsA family.

It localises to the cytoplasm. The enzyme catalyses D-arabinose 5-phosphate + phosphoenolpyruvate + H2O = 3-deoxy-alpha-D-manno-2-octulosonate-8-phosphate + phosphate. It functions in the pathway carbohydrate biosynthesis; 3-deoxy-D-manno-octulosonate biosynthesis; 3-deoxy-D-manno-octulosonate from D-ribulose 5-phosphate: step 2/3. The protein operates within bacterial outer membrane biogenesis; lipopolysaccharide biosynthesis. In Campylobacter jejuni subsp. doylei (strain ATCC BAA-1458 / RM4099 / 269.97), this protein is 2-dehydro-3-deoxyphosphooctonate aldolase.